A 367-amino-acid chain; its full sequence is MNLADKVLVVNDNLPIRTDKPVHSGKVRSVYWLTEEDSARLIKDKGYDVPADAPLAIMVISDRISAFDCVWQGENGLNGVPGKGTALNAISNHWFKLFKDKGLADSHILDIPHPLVWIVQKARPVMIEAIARQYITGSMWRSYTKGEREFCGITIPEGLEKDQKLPELLITPSTKGVLTGLEGVPEADDVNVSRSDIERHVKGFNFSNESDIDLYEKLLKEGFDVISDALAEHDQIFVDTKFEFGYVNDAAGNEKLIYMDEVGTPDSSRIWDGSSHRDGKIIEQSKEGFRQWLLNHFPDPDILLNKNRMVERFALASDNKLPESVMMDISNTYVGIAEKIIGKKLHISDNPKQEIIDILRDEYQLIV.

This sequence belongs to the SAICAR synthetase family.

The enzyme catalyses 5-amino-1-(5-phospho-D-ribosyl)imidazole-4-carboxylate + L-aspartate + ATP = (2S)-2-[5-amino-1-(5-phospho-beta-D-ribosyl)imidazole-4-carboxamido]succinate + ADP + phosphate + 2 H(+). It functions in the pathway purine metabolism; IMP biosynthesis via de novo pathway; 5-amino-1-(5-phospho-D-ribosyl)imidazole-4-carboxamide from 5-amino-1-(5-phospho-D-ribosyl)imidazole-4-carboxylate: step 1/2. In Shewanella pealeana (strain ATCC 700345 / ANG-SQ1), this protein is Phosphoribosylaminoimidazole-succinocarboxamide synthase.